A 287-amino-acid chain; its full sequence is Lipoyl synthase (287 aa).

[4Fe-4S] cluster-binding residues include Cys-34, Cys-39, Cys-45, Cys-60, Cys-64, Cys-67, and Ser-273. A Radical SAM core domain is found at 46–262 (WNKRHATVMI…KYIAYSKGFL (217 aa)).

This sequence belongs to the radical SAM superfamily. Lipoyl synthase family. Requires [4Fe-4S] cluster as cofactor.

The protein resides in the cytoplasm. It catalyses the reaction [[Fe-S] cluster scaffold protein carrying a second [4Fe-4S](2+) cluster] + N(6)-octanoyl-L-lysyl-[protein] + 2 oxidized [2Fe-2S]-[ferredoxin] + 2 S-adenosyl-L-methionine + 4 H(+) = [[Fe-S] cluster scaffold protein] + N(6)-[(R)-dihydrolipoyl]-L-lysyl-[protein] + 4 Fe(3+) + 2 hydrogen sulfide + 2 5'-deoxyadenosine + 2 L-methionine + 2 reduced [2Fe-2S]-[ferredoxin]. It participates in protein modification; protein lipoylation via endogenous pathway; protein N(6)-(lipoyl)lysine from octanoyl-[acyl-carrier-protein]: step 2/2. Its function is as follows. Catalyzes the radical-mediated insertion of two sulfur atoms into the C-6 and C-8 positions of the octanoyl moiety bound to the lipoyl domains of lipoate-dependent enzymes, thereby converting the octanoylated domains into lipoylated derivatives. This chain is Lipoyl synthase, found in Wolbachia sp. subsp. Brugia malayi (strain TRS).